Here is a 533-residue protein sequence, read N- to C-terminus: MTTSTIKPTGGDEVPPAGVVGNVADVGVAASLTKRDSEEDTWASKGYNYINPFVHRIEIDSHIEVAKIYVLTVLLLPIRVVGCVLSLISAWMFACIGLYGMTLDDLKAKPLTGWRKQMQYMTACGMRMVYTFGSFHYVTMKGRAATAKEAPILVVAPHSSYVDSILVVASGPPSIVAKRETADIPLLGKIINYAQPIYVQREDPNSRQNTIRDIVDRARSTDDWPQVVIFAEGTCTNRTALIKFKPGAFYPGVPVQPVLLKYPNKYDTFTWTWDGPGVLRLLWLTMTQFYNRCEIEYLPVYTPSEDEVADANLYANNVREVMAKALGVPTSDYSFEDVIVMSRARDMKIPFPGDIVEIERTIEKLGLNESQRDAELCKGFLRLSNTDRLDIITFGELLQVDLKNTDLHKLFALLDHRRSGTVSLKSFLLCSLFCKLKNSDLLTFLRALIHLYSESSQQIDRESFVRLMRHAGGKLNEQKAQALFYALDTDNLGYVSFDSFVELTEKQKSSYKFLYHKSEHIRRPKAVVTTAEN.

Topologically, residues 1 to 79 are cytoplasmic; the sequence is MTTSTIKPTG…VLTVLLLPIR (79 aa). The helical; Signal-anchor for type II membrane protein transmembrane segment at 80–100 threads the bilayer; that stretch reads VVGCVLSLISAWMFACIGLYG. Residues 101–533 are Lumenal-facing; sequence MTLDDLKAKP…PKAVVTTAEN (433 aa). The HXXXXD motif signature appears at 158-163; the sequence is HSSYVD. EF-hand domains follow at residues 402–437, 439–474, and 475–510; these read LKNTDLHKLFALLDHRRSGTVSLKSFLLCSLFCKLK, SDLLTFLRALIHLYSESSQQIDRESFVRLMRHAGGK, and LNEQKAQALFYALDTDNLGYVSFDSFVELTEKQKSS.

It belongs to the 1-acyl-sn-glycerol-3-phosphate acyltransferase family.

The protein localises to the endoplasmic reticulum membrane. The protein resides in the golgi apparatus membrane. It localises to the lipid droplet. The catalysed reaction is a 1-acyl-sn-glycero-3-phosphocholine + an acyl-CoA = a 1,2-diacyl-sn-glycero-3-phosphocholine + CoA. The protein operates within lipid metabolism; phospholipid metabolism. Its function is as follows. Acetyltransferase which mediates the conversion of 1-acyl-sn-glycero-3-phosphocholine (LPC) into phosphatidylcholine (PC). Has a calcium-independent activity. Displays a clear preference for saturated fatty acyl-CoAs, and 1-myristoyl or 1-palmitoyl LPC as acyl donors and acceptors, respectively. Involved in the regulation of lipid droplet number and size. This Drosophila melanogaster (Fruit fly) protein is Lysophosphatidylcholine acyltransferase.